Reading from the N-terminus, the 178-residue chain is MIDDNIENNEQTINDIAEEIVETANPEVTALKAEIEELKDKLIRTTAEIDNTRKRLEKARDEAKDYAIATFAKELLNVSDNLSRALAHKPANSDVEVTNIIAGVQMTKDELDKVFHKHHIEEIKPEIGSMFDYNLHNAIAQIEHPDHAPNSIITLMQSGYKIRDRLLRPATVQVVKKP.

The protein belongs to the GrpE family. As to quaternary structure, homodimer.

It localises to the cytoplasm. Participates actively in the response to hyperosmotic and heat shock by preventing the aggregation of stress-denatured proteins, in association with DnaK and GrpE. It is the nucleotide exchange factor for DnaK and may function as a thermosensor. Unfolded proteins bind initially to DnaJ; upon interaction with the DnaJ-bound protein, DnaK hydrolyzes its bound ATP, resulting in the formation of a stable complex. GrpE releases ADP from DnaK; ATP binding to DnaK triggers the release of the substrate protein, thus completing the reaction cycle. Several rounds of ATP-dependent interactions between DnaJ, DnaK and GrpE are required for fully efficient folding. In Rickettsia africae (strain ESF-5), this protein is Protein GrpE.